The sequence spans 327 residues: GTPase Obg (327 aa).

An Obg domain is found at 1 to 159 (MQFIDQANII…WEVQLELKLL (159 aa)). Residues 160–327 (AEVGIIGLPN…SLLFEVWKRI (168 aa)) enclose the OBG-type G domain. ATP is bound by residues 166 to 173 (GLPNAGKS), 191 to 195 (FTTLI), 213 to 216 (DIPG), 280 to 283 (NKME), and 309 to 311 (SSS). Residues Ser-173 and Thr-193 each contribute to the Mg(2+) site.

The protein belongs to the TRAFAC class OBG-HflX-like GTPase superfamily. OBG GTPase family. Monomer. Mg(2+) is required as a cofactor.

Its subcellular location is the cytoplasm. Its function is as follows. An essential GTPase which binds GTP, GDP and possibly (p)ppGpp with moderate affinity, with high nucleotide exchange rates and a fairly low GTP hydrolysis rate. Plays a role in control of the cell cycle, stress response, ribosome biogenesis and in those bacteria that undergo differentiation, in morphogenesis control. The chain is GTPase Obg from Prochlorococcus marinus (strain MIT 9312).